Consider the following 245-residue polypeptide: Adapter protein MecA (245 aa).

The protein belongs to the MecA family. As to quaternary structure, homodimer.

In terms of biological role, enables the recognition and targeting of unfolded and aggregated proteins to the ClpC protease or to other proteins involved in proteolysis. The chain is Adapter protein MecA from Streptococcus pneumoniae (strain ATCC BAA-255 / R6).